The following is a 126-amino-acid chain: S-adenosylmethionine decarboxylase proenzyme (126 aa).

Ser63 (schiff-base intermediate with substrate; via pyruvic acid) is an active-site residue. Ser63 is modified (pyruvic acid (Ser); by autocatalysis). The Proton acceptor; for processing activity role is filled by His68. Catalysis depends on Cys83, which acts as the Proton donor; for catalytic activity.

Belongs to the prokaryotic AdoMetDC family. Type 1 subfamily. In terms of assembly, heterotetramer of two alpha and two beta chains arranged as a dimer of alpha/beta heterodimers. Pyruvate is required as a cofactor. Post-translationally, is synthesized initially as an inactive proenzyme. Formation of the active enzyme involves a self-maturation process in which the active site pyruvoyl group is generated from an internal serine residue via an autocatalytic post-translational modification. Two non-identical subunits are generated from the proenzyme in this reaction, and the pyruvate is formed at the N-terminus of the alpha chain, which is derived from the carboxyl end of the proenzyme. The post-translation cleavage follows an unusual pathway, termed non-hydrolytic serinolysis, in which the side chain hydroxyl group of the serine supplies its oxygen atom to form the C-terminus of the beta chain, while the remainder of the serine residue undergoes an oxidative deamination to produce ammonia and the pyruvoyl group blocking the N-terminus of the alpha chain.

It catalyses the reaction S-adenosyl-L-methionine + H(+) = S-adenosyl 3-(methylsulfanyl)propylamine + CO2. It functions in the pathway amine and polyamine biosynthesis; S-adenosylmethioninamine biosynthesis; S-adenosylmethioninamine from S-adenosyl-L-methionine: step 1/1. In terms of biological role, catalyzes the decarboxylation of S-adenosylmethionine to S-adenosylmethioninamine (dcAdoMet), the propylamine donor required for the synthesis of the polyamines spermine and spermidine from the diamine putrescine. This chain is S-adenosylmethionine decarboxylase proenzyme, found in Pelotomaculum thermopropionicum (strain DSM 13744 / JCM 10971 / SI).